The following is a 279-amino-acid chain: Undecaprenyl-diphosphatase (279 aa).

The next 7 helical transmembrane spans lie at 10–30 (FICFKSIFLGIIQGFTEFLPI), 48–68 (LGVSFSASIQLGSAVAIIYYF), 96–116 (LFLYIFVASIPILVFGLLIKL), 128–148 (GLFSIAITSIVMALLLALSEI), 203–223 (SFLVGIPAVSISGLVELFSLF), 229–249 (IDIIPIIIGIISSFFSSIFAI), and 259–279 (NNTLVFVYYRLAFGIFILTTL).

It belongs to the UppP family.

It localises to the cell inner membrane. The catalysed reaction is di-trans,octa-cis-undecaprenyl diphosphate + H2O = di-trans,octa-cis-undecaprenyl phosphate + phosphate + H(+). In terms of biological role, catalyzes the dephosphorylation of undecaprenyl diphosphate (UPP). Confers resistance to bacitracin. The sequence is that of Undecaprenyl-diphosphatase from Prochlorococcus marinus (strain NATL2A).